The chain runs to 962 residues: pH-response regulator protein palF/prr-3 (962 aa).

Disordered stretches follow at residues 1 to 43, 225 to 326, 568 to 675, and 689 to 962; these read MGPF…DSST, APPK…THPS, TDSN…PDEN, and RLLP…RYER. The segment covering 237–246 has biased composition (basic residues); it reads ISKRAKKKRP. 3 stretches are compositionally biased toward polar residues: residues 297–307, 314–326, and 581–596; these read GFSQAPRSVSH, SGDSAASLSTHPS, and PSLTHTPSVTGGSNYV. Composition is skewed to low complexity over residues 696–722 and 738–747; these read PIAAASSSSFSAAVPSPSASSHVPDSS and PTPAATPATA. Over residues 793–805 the composition is skewed to basic and acidic residues; it reads TEDKQELERRRLL. Residues 830–839 show a composition bias toward low complexity; the sequence is AGPSGSRAGP. A compositionally biased stretch (pro residues) spans 840–849; that stretch reads SAPPPAPPVA. Residues 913-928 show a composition bias toward low complexity; sequence PSSPVLAPASAFFPAS. Residues 929–949 are compositionally biased toward polar residues; the sequence is GSGNVHDSPREQGQQARSDSS.

The protein belongs to the arrestin family. PalF/RIM8 subfamily.

Its function is as follows. Required for the proteolytic cleavage of the transcription factor pacc-1 in response to alkaline ambient pH. The chain is pH-response regulator protein palF/prr-3 (prr-3) from Neurospora crassa (strain ATCC 24698 / 74-OR23-1A / CBS 708.71 / DSM 1257 / FGSC 987).